An 84-amino-acid chain; its full sequence is Cytochrome b559 subunit alpha (84 aa).

Residues 2-20 (AGTTGERPFSDIITSVRYW) lie on the Cytoplasmic side of the membrane. Residues 21-35 (VIHSITIPALFIAGW) form a helical membrane-spanning segment. Residue His23 coordinates heme. The Lumenal portion of the chain corresponds to 36-84 (LFVSTGLAYDVFGTPRPDSYYAQEQRSIPLVTDRFEAKQQVETFLEQLK).

The protein belongs to the PsbE/PsbF family. Heterodimer of an alpha subunit and a beta subunit. PSII is composed of 1 copy each of membrane proteins PsbA, PsbB, PsbC, PsbD, PsbE, PsbF, PsbH, PsbI, PsbJ, PsbK, PsbL, PsbM, PsbT, PsbX, PsbY, PsbZ, Psb30/Ycf12, peripheral proteins PsbO, CyanoQ (PsbQ), PsbU, PsbV and a large number of cofactors. It forms dimeric complexes. The cofactor is heme b.

The protein localises to the cellular thylakoid membrane. Functionally, this b-type cytochrome is tightly associated with the reaction center of photosystem II (PSII). PSII is a light-driven water:plastoquinone oxidoreductase that uses light energy to abstract electrons from H(2)O, generating O(2) and a proton gradient subsequently used for ATP formation. It consists of a core antenna complex that captures photons, and an electron transfer chain that converts photonic excitation into a charge separation. This is Cytochrome b559 subunit alpha from Thermostichus vulcanus (Synechococcus vulcanus).